A 394-amino-acid polypeptide reads, in one-letter code: Venom metalloproteinase antarease-like TtrivMP_A (394 aa).

The signal sequence occupies residues 1–16 (MISYLASIFLLATVSA). Residues 17-158 (VPSGRVEVVF…AENVSRMAEE (142 aa)) constitute a propeptide that is removed on maturation. N-linked (GlcNAc...) asparagine glycosylation is present at N151. A Peptidase M12B domain is found at 162–390 (IVVEYYIVTD…KPTAFCIFEQ (229 aa)). C295 and C386 are joined by a disulfide. H319 contacts Zn(2+). Residue E320 is part of the active site. Zn(2+) is bound by residues H323 and H329.

The protein belongs to the venom metalloproteinase (M12B) family. Zn(2+) is required as a cofactor. As to expression, expressed by the venom gland.

It localises to the secreted. Its activity is regulated as follows. Inhibited by EDTA. Its function is as follows. Acts as a metalloprotease. Penetrates intact tissue and specifically cleaves the vesicle-associated membrane protein 2 (VAMP2) (part of the SNARE complex) involved in pancreatic secretion, thus disrupting the normal vesicular traffic. In Tityus trivittatus (Argentinean scorpion), this protein is Venom metalloproteinase antarease-like TtrivMP_A.